The sequence spans 186 residues: uncharacterized protein (186 aa).

The protein belongs to the MG032/MG096/MG288 family.

This is an uncharacterized protein from Mycoplasma pneumoniae (strain ATCC 29342 / M129 / Subtype 1) (Mycoplasmoides pneumoniae).